Consider the following 297-residue polypeptide: 4-diphosphocytidyl-2-C-methyl-D-erythritol kinase (297 aa).

Lys-6 is a catalytic residue. 94 to 104 (PVAGGMAGGSA) is an ATP binding site. Asp-136 is a catalytic residue.

The protein belongs to the GHMP kinase family. IspE subfamily.

It carries out the reaction 4-CDP-2-C-methyl-D-erythritol + ATP = 4-CDP-2-C-methyl-D-erythritol 2-phosphate + ADP + H(+). It participates in isoprenoid biosynthesis; isopentenyl diphosphate biosynthesis via DXP pathway; isopentenyl diphosphate from 1-deoxy-D-xylulose 5-phosphate: step 3/6. Its function is as follows. Catalyzes the phosphorylation of the position 2 hydroxy group of 4-diphosphocytidyl-2C-methyl-D-erythritol. This chain is 4-diphosphocytidyl-2-C-methyl-D-erythritol kinase, found in Nocardioides sp. (strain ATCC BAA-499 / JS614).